Here is an 829-residue protein sequence, read N- to C-terminus: Periplasmic nitrate reductase (829 aa).

The segment at residues 1–30 (MKLSRRDFMKANAVAAAAAVAGVSAPTLAA) is a signal peptide (tat-type signal). In terms of domain architecture, 4Fe-4S Mo/W bis-MGD-type spans 41-97 (ITWDKAPCRFCGTGCSVLVGSQDGRVVATQGDPDAPVNRGLNCIKGYFLSKIMYGQD). [4Fe-4S] cluster-binding residues include C48, C51, C55, and C83. Mo-bis(molybdopterin guanine dinucleotide) contacts are provided by residues K85, Q152, N177, C181, 214–221 (WGSNMAEM), 245–249 (STFEH), 264–266 (QTD), M374, Q378, N484, 510–511 (SD), K533, D560, and 719–728 (TGRVLEHWHT). F795 is a substrate binding site. Positions 803 and 820 each coordinate Mo-bis(molybdopterin guanine dinucleotide).

Belongs to the prokaryotic molybdopterin-containing oxidoreductase family. NasA/NapA/NarB subfamily. In terms of assembly, component of the periplasmic nitrate reductase NapAB complex composed of NapA and NapB. [4Fe-4S] cluster serves as cofactor. It depends on Mo-bis(molybdopterin guanine dinucleotide) as a cofactor. In terms of processing, predicted to be exported by the Tat system. The position of the signal peptide cleavage has not been experimentally proven.

The protein localises to the periplasm. It catalyses the reaction 2 Fe(II)-[cytochrome] + nitrate + 2 H(+) = 2 Fe(III)-[cytochrome] + nitrite + H2O. Functionally, catalytic subunit of the periplasmic nitrate reductase complex NapAB. Receives electrons from NapB and catalyzes the reduction of nitrate to nitrite. The sequence is that of Periplasmic nitrate reductase from Aeromonas hydrophila subsp. hydrophila (strain ATCC 7966 / DSM 30187 / BCRC 13018 / CCUG 14551 / JCM 1027 / KCTC 2358 / NCIMB 9240 / NCTC 8049).